Consider the following 234-residue polypeptide: Phosphoribosylaminoimidazole-succinocarboxamide synthase (234 aa).

Belongs to the SAICAR synthetase family.

It catalyses the reaction 5-amino-1-(5-phospho-D-ribosyl)imidazole-4-carboxylate + L-aspartate + ATP = (2S)-2-[5-amino-1-(5-phospho-beta-D-ribosyl)imidazole-4-carboxamido]succinate + ADP + phosphate + 2 H(+). The protein operates within purine metabolism; IMP biosynthesis via de novo pathway; 5-amino-1-(5-phospho-D-ribosyl)imidazole-4-carboxamide from 5-amino-1-(5-phospho-D-ribosyl)imidazole-4-carboxylate: step 1/2. In Clostridium botulinum (strain Okra / Type B1), this protein is Phosphoribosylaminoimidazole-succinocarboxamide synthase.